Consider the following 291-residue polypeptide: Small ribosomal subunit protein uS2 (291 aa).

The disordered stretch occupies residues 254–291; that stretch reads RTSNRDNKNNKNNNNTDNTDNAASIKEEDLIGGSNNEN. The span at 263–277 shows a compositional bias: low complexity; that stretch reads NKNNNNTDNTDNAAS.

The protein belongs to the universal ribosomal protein uS2 family.

The chain is Small ribosomal subunit protein uS2 from Ehrlichia canis (strain Jake).